Reading from the N-terminus, the 970-residue chain is Translation initiation factor IF-2 (970 aa).

Disordered regions lie at residues 54 to 270 and 328 to 348; these read KILA…TATQ and DKRRGRTPGRPMSEEQAKSLS. Residues 87–96 show a composition bias toward low complexity; the sequence is QEAQPVEAQP. Residues 98 to 112 are compositionally biased toward polar residues; that stretch reads YEEQPSYEEQPSYEE. Residues 121-149 show a composition bias toward low complexity; that stretch reads EVAAEAAPEPVEEPASSPEGGAPAGGAEP. Composition is skewed to pro residues over residues 150 to 160 and 168 to 182; these read QPAPEAPPPSA and PSAPPSPAVRPPAPS. Residues 183 to 253 are compositionally biased toward low complexity; it reads VPAGAQPPGA…PHGPGAQPGQ (71 aa). The 170-residue stretch at 469–638 folds into the tr-type G domain; it reads IRPPVVTVMG…ALQSEVLELK (170 aa). The G1 stretch occupies residues 478 to 485; that stretch reads GHVDHGKT. 478-485 contacts GTP; it reads GHVDHGKT. The G2 stretch occupies residues 503 to 507; sequence GITQH. Residues 524 to 527 form a G3 region; that stretch reads DTPG. GTP-binding positions include 524-528 and 578-581; these read DTPGH and NKID. Residues 578-581 form a G4 region; the sequence is NKID. Positions 614 to 616 are G5; sequence SAR.

The protein belongs to the TRAFAC class translation factor GTPase superfamily. Classic translation factor GTPase family. IF-2 subfamily.

The protein resides in the cytoplasm. Its function is as follows. One of the essential components for the initiation of protein synthesis. Protects formylmethionyl-tRNA from spontaneous hydrolysis and promotes its binding to the 30S ribosomal subunits. Also involved in the hydrolysis of GTP during the formation of the 70S ribosomal complex. This Anaeromyxobacter sp. (strain Fw109-5) protein is Translation initiation factor IF-2.